We begin with the raw amino-acid sequence, 173 residues long: Small ribosomal subunit protein uS5 (173 aa).

In terms of domain architecture, S5 DRBM spans 17–80 (WQERVIQIRR…ADGKKQLIEV (64 aa)).

It belongs to the universal ribosomal protein uS5 family. In terms of assembly, part of the 30S ribosomal subunit. Contacts proteins S4 and S8.

In terms of biological role, with S4 and S12 plays an important role in translational accuracy. Functionally, located at the back of the 30S subunit body where it stabilizes the conformation of the head with respect to the body. The chain is Small ribosomal subunit protein uS5 from Microcystis aeruginosa (strain NIES-843 / IAM M-2473).